The following is a 318-amino-acid chain: MANTLEQLKSYTTIVADTGDIEAIKRYQPEDATTNPSLILKAAQIPEYSYLIDNAIAWAQTQSTELEQQIDDASDKLAVNIGVEILKLVPGRISTEVDARLSFDKEKSIAKAHKLVRLYQEAGIDKSRILIKLASTWEGICAAKELEQEGINCNLTLLFSFAQARACAEAGVYLISPFVGRILDWYKKDTGKDYAPANDPGVVSVTEIYNYYKQHGYNTVVMGASFRNIGEIIELAGCDRLTIGPSLLEELANSQAQIQAKLLPATTTVAAETPLTEAQFRWDFNQDPMAVEKLAEGIRNFAIDQGKLEVMLKAKLSN.

Catalysis depends on Lys132, which acts as the Schiff-base intermediate with substrate.

It belongs to the transaldolase family. Type 1 subfamily. In terms of assembly, homodimer.

It localises to the cytoplasm. It catalyses the reaction D-sedoheptulose 7-phosphate + D-glyceraldehyde 3-phosphate = D-erythrose 4-phosphate + beta-D-fructose 6-phosphate. The protein operates within carbohydrate degradation; pentose phosphate pathway; D-glyceraldehyde 3-phosphate and beta-D-fructose 6-phosphate from D-ribose 5-phosphate and D-xylulose 5-phosphate (non-oxidative stage): step 2/3. Functionally, transaldolase is important for the balance of metabolites in the pentose-phosphate pathway. This chain is Transaldolase, found in Shewanella putrefaciens (strain CN-32 / ATCC BAA-453).